We begin with the raw amino-acid sequence, 274 residues long: Large ribosomal subunit protein uL2 (274 aa).

A disordered region spans residues Val223 to Lys274.

This sequence belongs to the universal ribosomal protein uL2 family. In terms of assembly, part of the 50S ribosomal subunit. Forms a bridge to the 30S subunit in the 70S ribosome.

In terms of biological role, one of the primary rRNA binding proteins. Required for association of the 30S and 50S subunits to form the 70S ribosome, for tRNA binding and peptide bond formation. It has been suggested to have peptidyltransferase activity; this is somewhat controversial. Makes several contacts with the 16S rRNA in the 70S ribosome. This is Large ribosomal subunit protein uL2 from Shewanella amazonensis (strain ATCC BAA-1098 / SB2B).